Consider the following 152-residue polypeptide: 3-hydroxyacyl-[acyl-carrier-protein] dehydratase FabZ (152 aa).

Histidine 58 is an active-site residue.

The protein belongs to the thioester dehydratase family. FabZ subfamily.

It localises to the cytoplasm. The catalysed reaction is a (3R)-hydroxyacyl-[ACP] = a (2E)-enoyl-[ACP] + H2O. In terms of biological role, involved in unsaturated fatty acids biosynthesis. Catalyzes the dehydration of short chain beta-hydroxyacyl-ACPs and long chain saturated and unsaturated beta-hydroxyacyl-ACPs. This Prochlorococcus marinus (strain MIT 9312) protein is 3-hydroxyacyl-[acyl-carrier-protein] dehydratase FabZ.